A 253-amino-acid polypeptide reads, in one-letter code: Ribonuclease HII (253 aa).

Positions 70-253 (NLIAGIDEVG…KSFEPIKSML (184 aa)) constitute an RNase H type-2 domain. D76, E77, and D168 together coordinate a divalent metal cation.

Belongs to the RNase HII family. Requires Mn(2+) as cofactor. The cofactor is Mg(2+).

Its subcellular location is the cytoplasm. The enzyme catalyses Endonucleolytic cleavage to 5'-phosphomonoester.. Functionally, endonuclease that specifically degrades the RNA of RNA-DNA hybrids. This Streptococcus agalactiae serotype Ia (strain ATCC 27591 / A909 / CDC SS700) protein is Ribonuclease HII.